We begin with the raw amino-acid sequence, 282 residues long: Biotin synthase (282 aa).

The 230-residue stretch at 1 to 230 folds into the Radical SAM core domain; that stretch reads MSDNKIYLCA…NQMLMIAGGR (230 aa). [4Fe-4S] cluster contacts are provided by C19, C23, and C26. 3 residues coordinate [2Fe-2S] cluster: C63, C98, and C156.

Belongs to the radical SAM superfamily. Biotin synthase family. In terms of assembly, homodimer. [4Fe-4S] cluster is required as a cofactor. The cofactor is [2Fe-2S] cluster.

It catalyses the reaction (4R,5S)-dethiobiotin + (sulfur carrier)-SH + 2 reduced [2Fe-2S]-[ferredoxin] + 2 S-adenosyl-L-methionine = (sulfur carrier)-H + biotin + 2 5'-deoxyadenosine + 2 L-methionine + 2 oxidized [2Fe-2S]-[ferredoxin]. It participates in cofactor biosynthesis; biotin biosynthesis; biotin from 7,8-diaminononanoate: step 2/2. Its function is as follows. Catalyzes the conversion of dethiobiotin (DTB) to biotin by the insertion of a sulfur atom into dethiobiotin via a radical-based mechanism. In Aliarcobacter butzleri (strain RM4018) (Arcobacter butzleri), this protein is Biotin synthase.